Reading from the N-terminus, the 107-residue chain is C-X-C motif chemokine 3 (107 aa).

Residues 1–34 (MAHATLSAAPSNPRLLRVALLLLLLVAASRRAAG) form the signal peptide. 2 disulfide bridges follow: Cys43/Cys69 and Cys45/Cys85.

This sequence belongs to the intercrine alpha (chemokine CxC) family. N-terminal processed form GRO-gamma(5-73) is produced by proteolytic cleavage after secretion from peripheral blood monocytes.

Its subcellular location is the secreted. Functionally, ligand for CXCR2. Has chemotactic activity for neutrophils. May play a role in inflammation and exert its effects on endothelial cells in an autocrine fashion. In vitro, the processed form GRO-gamma(5-73) shows a fivefold higher chemotactic activity for neutrophilic granulocytes. This chain is C-X-C motif chemokine 3 (CXCL3), found in Homo sapiens (Human).